The following is a 466-amino-acid chain: Cysteine--tRNA ligase (466 aa).

Cys28 contacts Zn(2+). The 'HIGH' region signature appears at 30–40 (PTVYNYIHIGN). Zn(2+)-binding residues include Cys208, His233, and Glu237. The 'KMSKS' region signature appears at 265 to 269 (KMSKS). Residue Lys268 coordinates ATP.

The protein belongs to the class-I aminoacyl-tRNA synthetase family. As to quaternary structure, monomer. It depends on Zn(2+) as a cofactor.

Its subcellular location is the cytoplasm. The enzyme catalyses tRNA(Cys) + L-cysteine + ATP = L-cysteinyl-tRNA(Cys) + AMP + diphosphate. The chain is Cysteine--tRNA ligase from Staphylococcus saprophyticus subsp. saprophyticus (strain ATCC 15305 / DSM 20229 / NCIMB 8711 / NCTC 7292 / S-41).